The following is a 393-amino-acid chain: Proteasome-activating nucleotidase (393 aa).

Positions 14–53 (SDEVQLVRLLEEKIKSLQIEIENLRKELNYYKAEMEKMLS) form a coiled coil. ATP contacts are provided by residues 178-183 (GTGKTM) and Y317. The tract at residues 391–393 (KYS) is docks into pockets in the proteasome alpha-ring to cause gate opening.

This sequence belongs to the AAA ATPase family. As to quaternary structure, homohexamer. The hexameric complex has a two-ring architecture resembling a top hat that caps the 20S proteasome core at one or both ends. Upon ATP-binding, the C-terminus of PAN interacts with the alpha-rings of the proteasome core by binding to the intersubunit pockets.

The protein localises to the cytoplasm. ATPase which is responsible for recognizing, binding, unfolding and translocation of substrate proteins into the archaeal 20S proteasome core particle. Is essential for opening the gate of the 20S proteasome via an interaction with its C-terminus, thereby allowing substrate entry and access to the site of proteolysis. Thus, the C-termini of the proteasomal ATPase function like a 'key in a lock' to induce gate opening and therefore regulate proteolysis. Unfolding activity requires energy from ATP hydrolysis, whereas ATP binding alone promotes ATPase-20S proteasome association which triggers gate opening, and supports translocation of unfolded substrates. The sequence is that of Proteasome-activating nucleotidase from Saccharolobus islandicus (strain M.16.27) (Sulfolobus islandicus).